Here is a 326-residue protein sequence, read N- to C-terminus: Nucleoporin Nup37 (326 aa).

WD repeat units lie at residues 6-54, 61-109, 115-154, 159-195, 199-237, 242-282, and 287-324; these read SRNA…FQEE, IQYK…LFTS, NEYK…IWNL, TAHF…FYDL, QAIL…IWDI, YPQN…QFQI, and HPQP…FWVT.

In terms of assembly, component of the Nup107-160 subcomplex of the nuclear pore complex (NPC). The Nup107-160 subcomplex includes NUP160, NUP133, NUP107, NUP98, NUP85, NUP43, NUP37, SEH1 and SEC13.

The protein localises to the chromosome. Its subcellular location is the centromere. The protein resides in the kinetochore. It localises to the nucleus. It is found in the nuclear pore complex. Component of the Nup107-160 subcomplex of the nuclear pore complex (NPC). The Nup107-160 subcomplex is required for the assembly of a functional NPC. The Nup107-160 subcomplex is also required for normal kinetochore microtubule attachment, mitotic progression and chromosome segregation. The polypeptide is Nucleoporin Nup37 (NUP37) (Homo sapiens (Human)).